A 114-amino-acid polypeptide reads, in one-letter code: Nascent polypeptide-associated complex protein (114 aa).

One can recognise an NAC-A/B domain in the interval 5–69 (PSQFKNLERM…AKEAQKEEPK (65 aa)).

The protein belongs to the NAC-alpha family. In terms of assembly, homodimer. Interacts with the ribosome. Binds ribosomal RNA.

Contacts the emerging nascent chain on the ribosome. This chain is Nascent polypeptide-associated complex protein, found in Sulfurisphaera tokodaii (strain DSM 16993 / JCM 10545 / NBRC 100140 / 7) (Sulfolobus tokodaii).